Here is a 745-residue protein sequence, read N- to C-terminus: Polyribonucleotide nucleotidyltransferase (745 aa).

2 residues coordinate Mg(2+): Asp-487 and Asp-493. Residues 554-613 form the KH domain; it reads PSTTTIKIDKDKIRDIIGPGGKVIKEICEISGAKIDISDDGTVSIYASDRDKLKVALDKI. The region spanning 623–691 is the S1 motif domain; sequence GEIFNGTVMK…NKGKAKLTIK (69 aa). The segment at 691 to 745 is disordered; it reads KNADKDKSSNNTKPKTNAKDNSEPEQRRDSSKKRAWNEDNNAETAEVITERKYFN. Over residues 707–719 the composition is skewed to basic and acidic residues; that stretch reads NAKDNSEPEQRRD.

Belongs to the polyribonucleotide nucleotidyltransferase family. Mg(2+) serves as cofactor.

It localises to the cytoplasm. The catalysed reaction is RNA(n+1) + phosphate = RNA(n) + a ribonucleoside 5'-diphosphate. In terms of biological role, involved in mRNA degradation. Catalyzes the phosphorolysis of single-stranded polyribonucleotides processively in the 3'- to 5'-direction. This is Polyribonucleotide nucleotidyltransferase from Rickettsia massiliae (strain Mtu5).